Reading from the N-terminus, the 156-residue chain is Small ribosomal subunit protein uS7 (156 aa).

It belongs to the universal ribosomal protein uS7 family. In terms of assembly, part of the 30S ribosomal subunit. Contacts proteins S9 and S11.

In terms of biological role, one of the primary rRNA binding proteins, it binds directly to 16S rRNA where it nucleates assembly of the head domain of the 30S subunit. Is located at the subunit interface close to the decoding center, probably blocks exit of the E-site tRNA. This is Small ribosomal subunit protein uS7 from Acholeplasma laidlawii (strain PG-8A).